The primary structure comprises 246 residues: Type III pantothenate kinase (246 aa).

6–13 (DVGNTHSV) serves as a coordination point for ATP. Position 103–106 (103–106 (GADR)) interacts with substrate. Aspartate 105 (proton acceptor) is an active-site residue. Aspartate 125 is a binding site for K(+). Position 128 (threonine 128) interacts with ATP. Threonine 179 contacts substrate.

Belongs to the type III pantothenate kinase family. As to quaternary structure, homodimer. The cofactor is NH4(+). K(+) is required as a cofactor.

Its subcellular location is the cytoplasm. It carries out the reaction (R)-pantothenate + ATP = (R)-4'-phosphopantothenate + ADP + H(+). It functions in the pathway cofactor biosynthesis; coenzyme A biosynthesis; CoA from (R)-pantothenate: step 1/5. In terms of biological role, catalyzes the phosphorylation of pantothenate (Pan), the first step in CoA biosynthesis. The protein is Type III pantothenate kinase of Thermotoga sp. (strain RQ2).